Consider the following 209-residue polypeptide: Protein-L-isoaspartate O-methyltransferase (209 aa).

Ser-55 is a catalytic residue.

Belongs to the methyltransferase superfamily. L-isoaspartyl/D-aspartyl protein methyltransferase family.

It localises to the cytoplasm. The catalysed reaction is [protein]-L-isoaspartate + S-adenosyl-L-methionine = [protein]-L-isoaspartate alpha-methyl ester + S-adenosyl-L-homocysteine. In terms of biological role, catalyzes the methyl esterification of L-isoaspartyl residues in peptides and proteins that result from spontaneous decomposition of normal L-aspartyl and L-asparaginyl residues. It plays a role in the repair and/or degradation of damaged proteins. The chain is Protein-L-isoaspartate O-methyltransferase from Anaeromyxobacter dehalogenans (strain 2CP-1 / ATCC BAA-258).